Here is a 351-residue protein sequence, read N- to C-terminus: MQVEVKLKENAYKVYIDELEELEFDTKVFILSNPKISGLHLKTLLSKIKAKEISIATVKDGEEYKNLSTMEEILSQMFNSKLDRKSVLISFGGGVISDMGGFAASIYQRGIDFINIPTTLLACVDAAVGGKTGVNNNFGKNLIGTFYQPKAVYCESSFLKTLSSRELAAGMAEFIKMAAIFDDSMLDFIEKIDEKSFLNATCENEIFTQIIAKSIELKARVVEQDEKESGLRMLLNYGHTFAHVIENFTDYKLYLHGEAVAIGMVMANQLALNLGLLDKMQSQRIKDILLKFGLPISYKINSVDEFYEAFFMDKKSSNKKINFVLASPLGKGLIKGDISKEDIITTLREFQ.

NAD(+)-binding positions include 60-65 (DGEEYK), 94-98 (GVISD), 118-119 (TT), Lys-131, Lys-140, and 158-161 (FLKT). Zn(2+) contacts are provided by Glu-173, His-239, and His-256.

The protein belongs to the sugar phosphate cyclases superfamily. Dehydroquinate synthase family. Co(2+) is required as a cofactor. The cofactor is Zn(2+). Requires NAD(+) as cofactor.

The protein localises to the cytoplasm. The catalysed reaction is 7-phospho-2-dehydro-3-deoxy-D-arabino-heptonate = 3-dehydroquinate + phosphate. Its pathway is metabolic intermediate biosynthesis; chorismate biosynthesis; chorismate from D-erythrose 4-phosphate and phosphoenolpyruvate: step 2/7. Its function is as follows. Catalyzes the conversion of 3-deoxy-D-arabino-heptulosonate 7-phosphate (DAHP) to dehydroquinate (DHQ). The chain is 3-dehydroquinate synthase from Campylobacter jejuni subsp. doylei (strain ATCC BAA-1458 / RM4099 / 269.97).